The primary structure comprises 785 residues: MPKGRQKVPHLDAPLGLPTCLWLELAGLFLLVPWVMGLAGTGGPDGQGTGGPSWAVHLESLEGDGEEETLEQQADALAQAAGLVNAGRIGELQGHYLFVQPAGHRPALEVEAIRQQVEAVLAGHEAVRWHSEQRLLRRAKRSVHFNDPKYPQQWHLNNRRSPGRDINVTGVWERNVTGRGVTVVVVDDGVEHTIQDIAPNYSPEGSYDLNSNDPDPMPHPDVENGNHHGTRCAGEIAAVPNNSFCAVGVAYGSRIAGIRVLDGPLTDSMEAVAFNKHYQINDIYSCSWGPDDDGKTVDGPHQLGKAALQHGVIAGRQGFGSIFVVASGNGGQHNDNCNYDGYANSIYTVTIGAVDEEGRMPFYAEECASMLAVTFSGGDKMLRSIVTTDWDLQKGTGCTEGHTGTSAAAPLAAGMIALMLQVRPCLTWRDVQHIIVFTATRYEDRRAEWVTNEAGFSHSHQHGFGLLNAWRLVNAAKIWTSVPYLASYVSPVLKENKAIPQSPRSLEVLWNVSRMDLEMSGLKTLEHVAVTVSITHPRRGSLELKLFCPSGMMSLIGAPRSMDSDPNGFNDWTFSTVRCWGERARGTYRLVIRDVGDESFQVGILRQWQLTLYGSVWSAVDIRDRQRLLESAMSGKYLHDDFALPCPPGLKIPEEDGYTITPNTLKTLVLVGCFTVFWTVYYMLEVYLSQRNVASNQVCRSGPCHWPHRSRKAKEEGTELESVPLCSSKDPDEVETESRGPPTTSDLLAPDLLEQGDWSLSQNKSALDCPHQHLDVPHGKEEQIC.

The N-terminal stretch at 1-37 (MPKGRQKVPHLDAPLGLPTCLWLELAGLFLLVPWVMG) is a signal peptide. Residues 38–141 (LAGTGGPDGQ…EQRLLRRAKR (104 aa)) constitute a propeptide that is removed on maturation. At 142–667 (SVHFNDPKYP…YTITPNTLKT (526 aa)) the chain is on the extracellular side. Positions 153-473 (QWHLNNRRSP…FGLLNAWRLV (321 aa)) constitute a Peptidase S8 domain. N-linked (GlcNAc...) asparagine glycans are attached at residues N167 and N175. The Charge relay system role is filled by D187. The tract at residues 197–219 (IAPNYSPEGSYDLNSNDPDPMPH) is disordered. The active-site Charge relay system is H228. Residue N241 is glycosylated (N-linked (GlcNAc...) asparagine). S406 (charge relay system) is an active-site residue. Positions 481–618 (SVPYLASYVS…QLTLYGSVWS (138 aa)) constitute a P/Homo B domain. N-linked (GlcNAc...) asparagine glycosylation occurs at N511. Residues 668 to 688 (LVLVGCFTVFWTVYYMLEVYL) form a helical membrane-spanning segment. Over 689–785 (SQRNVASNQV…VPHGKEEQIC (97 aa)) the chain is Cytoplasmic. The disordered stretch occupies residues 700 to 751 (RSGPCHWPHRSRKAKEEGTELESVPLCSSKDPDEVETESRGPPTTSDLLAPD).

This sequence belongs to the peptidase S8 family. Ca(2+) serves as cofactor. Post-translationally, cysteine residues in the cytoplasmic tail are probably palmitoylated. N-glycosylated. In terms of tissue distribution, expressed in spleen, thymus, prostate, testis, ovary, small intestine, colon and peripheral blood leukocyte.

It localises to the golgi apparatus. The protein resides in the trans-Golgi network membrane. Inhibited by zinc and copper. In terms of biological role, serine endoprotease that processes various proproteins by cleavage at paired basic amino acids, recognizing the RXXX[KR]R consensus motif. Likely functions in the constitutive secretory pathway. The chain is Proprotein convertase subtilisin/kexin type 7 (PCSK7) from Homo sapiens (Human).